A 1018-amino-acid polypeptide reads, in one-letter code: Integrator complex subunit 5 (1018 aa).

Residues 1 to 26 (MSALCDPPGAPGPPGPAPATHGPAPL) form a disordered region. N-acetylserine is present on Ser2. Pro residues predominate over residues 8-17 (PGAPGPPGPA). At Ser278 the chain carries Phosphoserine. Transmembrane regions (helical) follow at residues 533-553 (LATQ…PLAF), 855-875 (LLFE…YCSV), and 929-949 (VFSQ…WGFL).

Belongs to the Integrator subunit 5 family. As to quaternary structure, component of the Integrator complex, composed of core subunits INTS1, INTS2, INTS3, INTS4, INTS5, INTS6, INTS7, INTS8, INTS9/RC74, INTS10, INTS11/CPSF3L, INTS12, INTS13, INTS14 and INTS15. The core complex associates with protein phosphatase 2A subunits PPP2CA and PPP2R1A, to form the Integrator-PP2A (INTAC) complex.

It localises to the nucleus. The protein resides in the cytoplasm. Its subcellular location is the nucleus membrane. Its function is as follows. Component of the integrator complex, a multiprotein complex that terminates RNA polymerase II (Pol II) transcription in the promoter-proximal region of genes. The integrator complex provides a quality checkpoint during transcription elongation by driving premature transcription termination of transcripts that are unfavorably configured for transcriptional elongation: the complex terminates transcription by (1) catalyzing dephosphorylation of the C-terminal domain (CTD) of Pol II subunit POLR2A/RPB1 and SUPT5H/SPT5, (2) degrading the exiting nascent RNA transcript via endonuclease activity and (3) promoting the release of Pol II from bound DNA. The integrator complex is also involved in terminating the synthesis of non-coding Pol II transcripts, such as enhancer RNAs (eRNAs), small nuclear RNAs (snRNAs), telomerase RNAs and long non-coding RNAs (lncRNAs). Mediates recruitment of cytoplasmic dynein to the nuclear envelope, probably as component of the integrator complex. The polypeptide is Integrator complex subunit 5 (Ints5) (Mus musculus (Mouse)).